A 341-amino-acid chain; its full sequence is Follistatin (341 aa).

Residues 1–29 (MLNERIQPGMIFLLTVSLCHFMEYRAVQA) form the signal peptide. Positions 30-103 (GNCWLQQSKN…TCENVDCGPG (74 aa)) constitute a TB domain. 8 cysteine pairs are disulfide-bonded: C32–C55, C42–C88, C56–C91, C95–C106, C100–C116, C118–C150, C122–C143, and C132–C164. N-linked (GlcNAc...) asparagine glycosylation occurs at N72. Positions 94 to 117 (TCENVDCGPGKKCKMNKKNKPRCV) constitute a Follistatin-like 1 domain. Kazal-like domains follow at residues 100 to 166 (CGPG…KCKK), 186 to 241 (NAYC…KCIK), and 264 to 318 (RGRC…SCNS). N124 is a glycosylation site (N-linked (GlcNAc...) asparagine). One can recognise a Follistatin-like 2 domain in the interval 167-190 (TCRDVLCPGSSSCVVDQTNNAYCV). 3 cysteine pairs are disulfide-bonded: C192–C225, C196–C218, and C207–C239. The Follistatin-like 3 domain occupies 244-268 (SCEDIQCSAGKKCLWDSRVGRGRCA). 3 cysteine pairs are disulfide-bonded: C270-C302, C274-C295, and C284-C316. N-linked (GlcNAc...) asparagine glycosylation occurs at N288. The span at 321–333 (EDTEEEEEEEEPD) shows a compositional bias: acidic residues. Residues 321–341 (EDTEEEEEEEEPDYSFVISSW) form a disordered region.

As to quaternary structure, monomer. In terms of tissue distribution, spemann organizer and notochord.

It is found in the secreted. In terms of biological role, binds directly to activin and functions as an activin antagonist which plays a role in neural induction. The short isoform is a more potent inhibitor of activin than the long isoform. Specific inhibitor of the biosynthesis and secretion of pituitary follicle stimulating hormone (FSH). The chain is Follistatin (fst) from Xenopus laevis (African clawed frog).